The sequence spans 25 residues: Hypotensin-2 (25 aa).

The interval 1 to 25 (AEIDFSGIPEDIIKEIKETNAKPPA) is disordered. Serine 6 is subject to Phosphoserine. Residues 11–25 (DIIKEIKETNAKPPA) are compositionally biased toward basic and acidic residues.

Belongs to the non-disulfide-bridged peptide (NDBP) superfamily. Expressed by the venom gland.

It is found in the secreted. Functionally, agonist of the B2 bradykinin receptor (BDKRB2). Potentiates the hypotensive effect of bradykinin (BK) and induces a direct vasorelaxing effect, independently of BK, by endothelium- and nitric oxide (NO)-dependent mechanisms in rat aortic ring preparations. Does not inhibit the angiotensin-converting enzyme (ACE). Also exerts proangiogenic, antiinflammatory, and antifibrogenic activities. Does not inhibit the angiotensin-converting enzyme (ACE) but weakly increases its activity, and weakly inhibits neprilysin (NEP) in a non-competitive manner. Exerts intermediate cytotoxicity and pro-inflammatory effects on mouse macrophages, and increases the phagocytic activity of these murine cells. Its function is as follows. Presents weak hemolytic activity at physiological concentrations (micromolar range), and weak lactate dehydrogenase (LDH) release from mast cells. Does not induce mast cell degranulation, and antimicrobial effects. In vivo, causes intense pain (but no edema formation), when injected in mice hind paws. Also induces discomfort and anxiety in mice, as it moderately diminishes locomotion and moderately increases rearing behavior. The chain is Hypotensin-2 from Tityus serrulatus (Brazilian scorpion).